The chain runs to 140 residues: Alkaline proteinase inhibitor (140 aa).

The first 25 residues, Met-1–Ala-25, serve as a signal peptide directing secretion.

The protein belongs to the protease inhibitor I38 family.

It localises to the periplasm. Inhibitor of the alkaline protease. The chain is Alkaline proteinase inhibitor (inh) from Pseudomonas brassicacearum (strain NFM421).